Reading from the N-terminus, the 103-residue chain is Large ribosomal subunit protein bL21 (103 aa).

It belongs to the bacterial ribosomal protein bL21 family. In terms of assembly, part of the 50S ribosomal subunit. Contacts protein L20.

Functionally, this protein binds to 23S rRNA in the presence of protein L20. This chain is Large ribosomal subunit protein bL21, found in Polynucleobacter asymbioticus (strain DSM 18221 / CIP 109841 / QLW-P1DMWA-1) (Polynucleobacter necessarius subsp. asymbioticus).